Reading from the N-terminus, the 397-residue chain is Ubiquitin-like modifier-activating enzyme 5 (397 aa).

ATP is bound by residues glycine 76, aspartate 97, lysine 120, asparagine 143, and asparagine 177. Zn(2+)-binding residues include cysteine 219 and cysteine 222. The active-site Glycyl thioester intermediate is cysteine 243. Zn(2+) contacts are provided by cysteine 296 and cysteine 301. A UFM1-interacting sequence (UIS) motif is present at residues 327-339; it reads IVHEDNDWGIELV. Positions 340–370 are linker; that stretch reads SETTEDELKAASGPVPDLPVGITVAYTIPNK. A UFC1-binding sequence (UFC) motif is present at residues 382-397; it reads ESEESLEDLMAKMRNL.

Belongs to the ubiquitin-activating E1 family. UBA5 subfamily. Homodimer; homodimerization is required for UFM1 activation. Interacts (via UIS motif) with UFM1; binds UFM1 via a trans-binding mechanism in which UFM1 interacts with distinct sites in both subunits of the UBA5 homodimer. Interacts (via C-terminus) with UFC1.

The protein localises to the cytoplasm. The protein resides in the nucleus. It is found in the endoplasmic reticulum membrane. Its subcellular location is the golgi apparatus. Functionally, E1-like enzyme which specifically catalyzes the first step in ufmylation. Activates UFM1 by first adenylating its C-terminal glycine residue with ATP, and thereafter linking this residue to the side chain of a cysteine residue in E1, yielding a UFM1-E1 thioester and free AMP. Activates UFM1 via a trans-binding mechanism, in which UFM1 interacts with distinct sites in both subunits of the UBA5 homodimer. Trans-binding also promotes stabilization of the UBA5 homodimer, and enhances ATP-binding. Transfer of UFM1 from UBA5 to the E2-like enzyme UFC1 also takes place using a trans mechanism. Ufmylation plays a key role in various processes, such as ribosome recycling, response to DNA damage, interferon response or reticulophagy (also called ER-phagy). The polypeptide is Ubiquitin-like modifier-activating enzyme 5 (Gallus gallus (Chicken)).